The sequence spans 227 residues: UPF0173 metal-dependent hydrolase BCE_4747 (227 aa).

Belongs to the UPF0173 family.

The sequence is that of UPF0173 metal-dependent hydrolase BCE_4747 from Bacillus cereus (strain ATCC 10987 / NRS 248).